The following is a 292-amino-acid chain: Protein LicB (292 aa).

EamA domains lie at 70–139 (ALSG…LLAI) and 160–286 (LGWS…VTLY).

This chain is Protein LicB (licB), found in Haemophilus influenzae (strain ATCC 51907 / DSM 11121 / KW20 / Rd).